The following is a 700-amino-acid chain: MAGIAAKLAKDREAAEGLGSHDRAIKYLNQDYEALRNECLEAGTLFQDPSFPAIPSALGFKELGPYSSKTRGIEWKRPTEICADPQFIIGGATRTDICQGALGDCWLLAAIASLTLNEEILARVVPLNQSFQENYAGIFHFQFWQYGEWVEVVVDDRLPTKDGELLFVHSAEGSEFWSALLEKAYAKINGCYEALSGGATTEGFEDFTGGIAEWYELKKPPPNLFKIIQKALQKGSLLGCSIDITSAADSEAITFQKLVKGHAYSVTGAEEVESNGSLQKLIRIRNPWGEVEWTGRWNDNCPSWNTIDPEERERLTRRHEDGEFWMSFSDFLRHYSRLEICNLTPDTLTSDTYKKWKLTKMDGNWRRGSTAGGCRNYPNTFWMNPQYLIKLEEEDEDEEDGESGCTFLVGLIQKHRRRQRKMGEDMHTIGFGIYEVPEELSGQTNIHLSKNFFLTNRARERSDTFINLREVLNRFKLPPGEYILVPSTFEPNKDGDFCIRVFSEKKADYQAVDDEIEANLEEFDISEDDIDDGFRRLFAQLAGEDAEISAFELQTILRRVLAKRQDIKSDGFSIETCKIMVDMLDSDGSGKLGLKEFYILWTKIQKYQKIYREIDVDRSGTMNSYEMRKALEEAGFKMPCQLHQVIVARFADDQLIIDFDNFVRCLVRLETLFKIFKQLDPENTGTIELDLISWLCFSVL.

At Ala-2 the chain carries N-acetylalanine. Residues 2–19 (AGIAAKLAKDREAAEGLG) constitute a propeptide, anchors to the small subunit. Positions 45–344 (LFQDPSFPAI…YSRLEICNLT (300 aa)) constitute a Calpain catalytic domain. The Ca(2+) site is built by Ile-89, Gly-91, and Asp-96. Cys-105 is an active-site residue. Positions 175, 229, and 230 each coordinate Ca(2+). Catalysis depends on residues His-262 and Asn-286. Residues Glu-292, Asp-299, and Glu-323 each contribute to the Ca(2+) site. The interval 345–514 (PDTLTSDTYK…KKADYQAVDD (170 aa)) is domain III. Positions 515–529 (EIEANLEEFDISEDD) are linker. Residues 530-700 (IDDGFRRLFA…LISWLCFSVL (171 aa)) form a domain IV region. Ca(2+)-binding residues include Ala-542, Asp-545, Glu-547, Glu-552, Asp-585, Asp-587, Ser-589, Lys-591, Glu-596, Asp-615, Asp-617, Ser-619, Thr-621, Glu-626, Asp-658, and Asn-661. 2 EF-hand domains span residues 572-605 (FSIE…TKIQ) and 602-637 (TKIQ…AGFK). One can recognise an EF-hand 3 domain in the interval 667-700 (VRLETLFKIFKQLDPENTGTIELDLISWLCFSVL).

It belongs to the peptidase C2 family. In terms of assembly, forms a heterodimer with a small (regulatory) subunit (CAPNS1). Interacts with CPEB3; this leads to cleavage of CPEB3. Interacts with PIDD1 alternative open reading frame protein altPIDD1. Requires Ca(2+) as cofactor. As to expression, ubiquitous.

The protein resides in the cytoplasm. The protein localises to the cell membrane. It carries out the reaction Broad endopeptidase specificity.. Activated by 200-1000 micromolar concentrations of calcium and inhibited by calpastatin. Functionally, calcium-regulated non-lysosomal thiol-protease which catalyzes limited proteolysis of substrates involved in cytoskeletal remodeling and signal transduction. Proteolytically cleaves MYOC at 'Arg-226'. Proteolytically cleaves CPEB3 following neuronal stimulation which abolishes CPEB3 translational repressor activity, leading to translation of CPEB3 target mRNAs. The protein is Calpain-2 catalytic subunit (CAPN2) of Homo sapiens (Human).